The sequence spans 77 residues: Translational regulator CsrA (77 aa).

This sequence belongs to the CsrA/RsmA family. As to quaternary structure, homodimer; the beta-strands of each monomer intercalate to form a hydrophobic core, while the alpha-helices form wings that extend away from the core.

It localises to the cytoplasm. A translational regulator that binds mRNA to regulate translation initiation and/or mRNA stability. Usually binds in the 5'-UTR at or near the Shine-Dalgarno sequence preventing ribosome-binding, thus repressing translation. Its main target seems to be the major flagellin gene, while its function is anatagonized by FliW. This Pseudarthrobacter chlorophenolicus (strain ATCC 700700 / DSM 12829 / CIP 107037 / JCM 12360 / KCTC 9906 / NCIMB 13794 / A6) (Arthrobacter chlorophenolicus) protein is Translational regulator CsrA.